We begin with the raw amino-acid sequence, 215 residues long: Rod-determining factor A (215 aa).

Its function is as follows. Involved in cell-shape determination. Required for the formation of rods and wild-type-like motility. This chain is Rod-determining factor A, found in Haloferax volcanii (strain ATCC 29605 / DSM 3757 / JCM 8879 / NBRC 14742 / NCIMB 2012 / VKM B-1768 / DS2) (Halobacterium volcanii).